We begin with the raw amino-acid sequence, 57 residues long: Small ribosomal subunit protein bS21 (57 aa).

Residues 35 to 57 (REHYEKPSVKRKKKAEAARKKKF) form a disordered region. Over residues 43–57 (VKRKKKAEAARKKKF) the composition is skewed to basic residues.

This sequence belongs to the bacterial ribosomal protein bS21 family.

In Alkaliphilus metalliredigens (strain QYMF), this protein is Small ribosomal subunit protein bS21.